A 339-amino-acid chain; its full sequence is Serine/threonine-protein kinase pdik1l-B (339 aa).

The region spanning 8–332 is the Protein kinase domain; it reads YDLIREVGRG…LELKLIQIAF (325 aa). ATP is bound by residues 14 to 22 and Lys37; that span reads VGRGSYGLV. Catalysis depends on Asp164, which acts as the Proton acceptor.

Belongs to the protein kinase superfamily. Ser/Thr protein kinase family.

It is found in the nucleus. It carries out the reaction L-seryl-[protein] + ATP = O-phospho-L-seryl-[protein] + ADP + H(+). The catalysed reaction is L-threonyl-[protein] + ATP = O-phospho-L-threonyl-[protein] + ADP + H(+). This Xenopus laevis (African clawed frog) protein is Serine/threonine-protein kinase pdik1l-B (pdik1-b).